Here is a 222-residue protein sequence, read N- to C-terminus: Elongation factor 1-beta' (222 aa).

The interval 71–113 (SQGTSPLTAGAKPTAPAPAAKDDDDDDVDLFGSGDEEEDAEAE) is disordered. Residues 78-89 (TAGAKPTAPAPA) are compositionally biased toward low complexity. The segment covering 92–111 (DDDDDDVDLFGSGDEEEDAE) has biased composition (acidic residues).

This sequence belongs to the EF-1-beta/EF-1-delta family. EF-1 is composed of 4 subunits: alpha, beta, beta' and gamma. Phosphorylated.

EF-1-beta and EF-1-beta' stimulate the exchange of GDP bound to EF-1-alpha to GTP. This is Elongation factor 1-beta' from Bombyx mori (Silk moth).